Reading from the N-terminus, the 392-residue chain is Homoserine O-acetyltransferase (392 aa).

Residues Asn-52 to Glu-356 enclose the AB hydrolase-1 domain. The active-site Nucleophile is the Ser-157. Residue Arg-227 coordinates substrate. Residues Asp-320 and His-350 contribute to the active site. Substrate is bound at residue Asp-351. The tract at residues Ser-373–Arg-392 is disordered.

The protein belongs to the AB hydrolase superfamily. MetX family. As to quaternary structure, homodimer.

It localises to the cytoplasm. The enzyme catalyses L-homoserine + acetyl-CoA = O-acetyl-L-homoserine + CoA. It functions in the pathway amino-acid biosynthesis; L-methionine biosynthesis via de novo pathway; O-acetyl-L-homoserine from L-homoserine: step 1/1. In terms of biological role, transfers an acetyl group from acetyl-CoA to L-homoserine, forming acetyl-L-homoserine. This is Homoserine O-acetyltransferase from Mycobacterium avium (strain 104).